The primary structure comprises 376 residues: Alanine racemase (376 aa).

Lys-40 acts as the Proton acceptor; specific for D-alanine in catalysis. At Lys-40 the chain carries N6-(pyridoxal phosphate)lysine. Arg-138 serves as a coordination point for substrate. Residue Tyr-270 is the Proton acceptor; specific for L-alanine of the active site. Met-317 contacts substrate.

The protein belongs to the alanine racemase family. Requires pyridoxal 5'-phosphate as cofactor.

The enzyme catalyses L-alanine = D-alanine. Its pathway is amino-acid biosynthesis; D-alanine biosynthesis; D-alanine from L-alanine: step 1/1. Its function is as follows. Catalyzes the interconversion of L-alanine and D-alanine. May also act on other amino acids. The polypeptide is Alanine racemase (alr) (Lactobacillus delbrueckii subsp. bulgaricus (strain ATCC BAA-365 / Lb-18)).